Here is a 204-residue protein sequence, read N- to C-terminus: MGTSGADLENIVLSLGLHSGFLGIFDKHFPGFLNVNKPSFAIVNTGDIIQGGLHWIAFAFDNVTSTFFMFDPFGWSDMELYRKYEFQYHRILKSTALTKPSRCIKLVKSKEAVQCTCSAACGLFCCLFLASFYHYPTFPMRGNPIIDLVDGIPPTKLHSSYGIYLTHCNQKKLIAWLLSNSAYFRKNAMLMIHNTRLYYLYTHL.

Catalysis depends on residues His54, Asp71, and Cys121.

The protein belongs to the peptidase C5 family. Interacts with protease cofactor pVI-C; this interaction is necessary for protease activation.

Its subcellular location is the virion. The protein resides in the host nucleus. The enzyme catalyses Cleaves proteins of the adenovirus and its host cell at two consensus sites: -Yaa-Xaa-Gly-Gly-|-Xaa- and -Yaa-Xaa-Gly-Xaa-|-Gly- (in which Yaa is Met, Ile or Leu, and Xaa is any amino acid).. Requires DNA and protease cofactor for maximal activation. Inside nascent virions, becomes partially activated by binding to the viral DNA, allowing it to cleave the cofactor that binds to the protease and fully activates it. Actin, like the viral protease cofactor, seems to act as a cofactor in the cleavage of cytokeratin 18 and of actin itself. In terms of biological role, cleaves viral precursor proteins (pTP, pIIIa, pVI, pVII, pVIII, and pX) inside newly assembled particles giving rise to mature virions. Protease complexed to its cofactor slides along the viral DNA to specifically locate and cleave the viral precursors. Mature virions have a weakened organization compared to the unmature virions, thereby facilitating subsequent uncoating. Without maturation, the particle lacks infectivity and is unable to uncoat. Late in adenovirus infection, in the cytoplasm, may participate in the cytoskeleton destruction. Cleaves host cell cytoskeletal keratins K7 and K18. This is Protease from Frog adenovirus 1 (strain ATCC VR-896) (FrAdV-1).